A 762-amino-acid chain; its full sequence is Polyribonucleotide nucleotidyltransferase (762 aa).

The Mg(2+) site is built by Asp531 and Asp537. Residues 597–656 (PRVTTIKVPVDKIGEVIGPKGKVINSITEETGAQISIEDDGTVFVGATDGPSAQAAIDKI) enclose the KH domain. Residues 668-737 (GERFLGTVVK…KRGKISLVLV (70 aa)) enclose the S1 motif domain.

This sequence belongs to the polyribonucleotide nucleotidyltransferase family. It depends on Mg(2+) as a cofactor.

Its subcellular location is the cytoplasm. The enzyme catalyses RNA(n+1) + phosphate = RNA(n) + a ribonucleoside 5'-diphosphate. In terms of biological role, involved in mRNA degradation. Catalyzes the phosphorolysis of single-stranded polyribonucleotides processively in the 3'- to 5'-direction. The protein is Polyribonucleotide nucleotidyltransferase of Mycobacterium marinum (strain ATCC BAA-535 / M).